Here is a 140-residue protein sequence, read N- to C-terminus: Ribosome-binding factor A (140 aa).

Belongs to the RbfA family. In terms of assembly, monomer. Binds 30S ribosomal subunits, but not 50S ribosomal subunits or 70S ribosomes.

The protein localises to the cytoplasm. Its function is as follows. One of several proteins that assist in the late maturation steps of the functional core of the 30S ribosomal subunit. Associates with free 30S ribosomal subunits (but not with 30S subunits that are part of 70S ribosomes or polysomes). Required for efficient processing of 16S rRNA. May interact with the 5'-terminal helix region of 16S rRNA. The chain is Ribosome-binding factor A from Cereibacter sphaeroides (strain ATCC 17025 / ATH 2.4.3) (Rhodobacter sphaeroides).